A 164-amino-acid chain; its full sequence is HTH-type transcriptional regulator IscR (164 aa).

In terms of domain architecture, HTH rrf2-type spans 2–131 (RLTSKGRYAV…NNITLGELVN (130 aa)). The segment at residues 28-51 (LADISERQGISLSYLEQLFSRLRK) is a DNA-binding region (H-T-H motif). The [2Fe-2S] cluster site is built by C92, C98, and C104.

The cofactor is [2Fe-2S] cluster.

Functionally, regulates the transcription of several operons and genes involved in the biogenesis of Fe-S clusters and Fe-S-containing proteins. This Salmonella agona (strain SL483) protein is HTH-type transcriptional regulator IscR.